We begin with the raw amino-acid sequence, 205 residues long: GTP cyclohydrolase-2 (205 aa).

GTP is bound at residue 49-53 (RIHSE). Residues cysteine 54, cysteine 65, and cysteine 67 each coordinate Zn(2+). Residues glutamine 70, 92–94 (EGR), and threonine 114 contribute to the GTP site. The Proton acceptor role is filled by aspartate 126. Residue arginine 128 is the Nucleophile of the active site. Threonine 149 and lysine 154 together coordinate GTP.

Belongs to the GTP cyclohydrolase II family. It depends on Zn(2+) as a cofactor.

It catalyses the reaction GTP + 4 H2O = 2,5-diamino-6-hydroxy-4-(5-phosphoribosylamino)-pyrimidine + formate + 2 phosphate + 3 H(+). It participates in cofactor biosynthesis; riboflavin biosynthesis; 5-amino-6-(D-ribitylamino)uracil from GTP: step 1/4. Functionally, catalyzes the conversion of GTP to 2,5-diamino-6-ribosylamino-4(3H)-pyrimidinone 5'-phosphate (DARP), formate and pyrophosphate. This is GTP cyclohydrolase-2 from Shewanella sediminis (strain HAW-EB3).